We begin with the raw amino-acid sequence, 249 residues long: Triosephosphate isomerase (249 aa).

9–11 (NWK) is a substrate binding site. The Electrophile role is filled by H95. E166 serves as the catalytic Proton acceptor. Substrate contacts are provided by residues G172, S211, and 232–233 (GG).

This sequence belongs to the triosephosphate isomerase family. In terms of assembly, homodimer.

The protein localises to the cytoplasm. The enzyme catalyses D-glyceraldehyde 3-phosphate = dihydroxyacetone phosphate. The protein operates within carbohydrate biosynthesis; gluconeogenesis. Its pathway is carbohydrate degradation; glycolysis; D-glyceraldehyde 3-phosphate from glycerone phosphate: step 1/1. In terms of biological role, involved in the gluconeogenesis. Catalyzes stereospecifically the conversion of dihydroxyacetone phosphate (DHAP) to D-glyceraldehyde-3-phosphate (G3P). The chain is Triosephosphate isomerase from Legionella pneumophila (strain Paris).